The following is a 183-amino-acid chain: Transmembrane protein 154 (183 aa).

A signal peptide spans 1 to 22; sequence MQAPRAALVFALVIALVPVGRG. At 23–75 the chain is on the extracellular side; the sequence is NYEELENSGDTTVESERPNKVTIPSTFAAVTIKETLNANINSTNFAPDENQLE. A helical transmembrane segment spans residues 76–96; sequence FILMVLIPLILLVLLLLSVVF. The Cytoplasmic portion of the chain corresponds to 97–183; it reads LATYYKRKRT…SNHNPSDSES (87 aa). Residues 163-183 form a disordered region; the sequence is ECLPTLKEEKESNHNPSDSES. Position 179 is a phosphoserine (S179).

It is found in the membrane. This is Transmembrane protein 154 (TMEM154) from Homo sapiens (Human).